The chain runs to 144 residues: uncharacterized protein (144 aa).

Helical transmembrane passes span 7–29 (FPAS…RDLV), 51–73 (VAIG…FLLV), 85–107 (AVLA…VGAF), and 122–139 (HLHH…LIFV).

It localises to the cell membrane. This is an uncharacterized protein from Treponema pallidum (strain Nichols).